The sequence spans 447 residues: ATP-dependent protease ATPase subunit HslU (447 aa).

ATP contacts are provided by residues isoleucine 17, 59 to 64 (GVGKTE), aspartate 256, glutamate 321, and arginine 393.

The protein belongs to the ClpX chaperone family. HslU subfamily. In terms of assembly, a double ring-shaped homohexamer of HslV is capped on each side by a ring-shaped HslU homohexamer. The assembly of the HslU/HslV complex is dependent on binding of ATP.

It localises to the cytoplasm. ATPase subunit of a proteasome-like degradation complex; this subunit has chaperone activity. The binding of ATP and its subsequent hydrolysis by HslU are essential for unfolding of protein substrates subsequently hydrolyzed by HslV. HslU recognizes the N-terminal part of its protein substrates and unfolds these before they are guided to HslV for hydrolysis. In Stutzerimonas stutzeri (strain A1501) (Pseudomonas stutzeri), this protein is ATP-dependent protease ATPase subunit HslU.